The following is a 476-amino-acid chain: Lipase (476 aa).

A signal peptide spans 1 to 23 (MGIFDYKNLGTEGSKTLFADAMA). S207 (charge relay system) is an active-site residue. Hemolysin-type calcium-binding repeat units lie at residues 372–389 (IGSD…ADFI), 390–407 (EGGK…HNTF), and 410–427 (SGHF…TDKL). Ca(2+) is bound by residues D437, D440, and D448.

The protein belongs to the AB hydrolase superfamily. Lipase family.

The enzyme catalyses a triacylglycerol + H2O = a diacylglycerol + a fatty acid + H(+). This chain is Lipase, found in Pseudomonas fluorescens.